Consider the following 496-residue polypeptide: Glutamyl-tRNA(Gln) amidotransferase subunit A (496 aa).

Catalysis depends on charge relay system residues lysine 75 and serine 150. The active-site Acyl-ester intermediate is the serine 174.

This sequence belongs to the amidase family. GatA subfamily. As to quaternary structure, heterotrimer of A, B and C subunits.

The enzyme catalyses L-glutamyl-tRNA(Gln) + L-glutamine + ATP + H2O = L-glutaminyl-tRNA(Gln) + L-glutamate + ADP + phosphate + H(+). Its function is as follows. Allows the formation of correctly charged Gln-tRNA(Gln) through the transamidation of misacylated Glu-tRNA(Gln) in organisms which lack glutaminyl-tRNA synthetase. The reaction takes place in the presence of glutamine and ATP through an activated gamma-phospho-Glu-tRNA(Gln). This Burkholderia pseudomallei (strain 1106a) protein is Glutamyl-tRNA(Gln) amidotransferase subunit A.